Reading from the N-terminus, the 421-residue chain is Gamma-glutamyl phosphate reductase (421 aa).

It belongs to the gamma-glutamyl phosphate reductase family.

The protein resides in the cytoplasm. The catalysed reaction is L-glutamate 5-semialdehyde + phosphate + NADP(+) = L-glutamyl 5-phosphate + NADPH + H(+). It participates in amino-acid biosynthesis; L-proline biosynthesis; L-glutamate 5-semialdehyde from L-glutamate: step 2/2. In terms of biological role, catalyzes the NADPH-dependent reduction of L-glutamate 5-phosphate into L-glutamate 5-semialdehyde and phosphate. The product spontaneously undergoes cyclization to form 1-pyrroline-5-carboxylate. The chain is Gamma-glutamyl phosphate reductase from Pseudomonas fluorescens (strain ATCC BAA-477 / NRRL B-23932 / Pf-5).